A 163-amino-acid chain; its full sequence is Xanthine-guanine phosphoribosyltransferase (163 aa).

5-phospho-alpha-D-ribose 1-diphosphate is bound by residues 43–44 (RG) and 95–103 (DDLVDTGGT). Position 96 (aspartate 96) interacts with Mg(2+). The guanine site is built by aspartate 99 and isoleucine 142. Aspartate 99 and isoleucine 142 together coordinate xanthine. GMP is bound by residues 99-103 (DTGGT) and 141-142 (WI).

This sequence belongs to the purine/pyrimidine phosphoribosyltransferase family. XGPT subfamily. Homotetramer. The cofactor is Mg(2+).

The protein localises to the cell inner membrane. The enzyme catalyses GMP + diphosphate = guanine + 5-phospho-alpha-D-ribose 1-diphosphate. The catalysed reaction is XMP + diphosphate = xanthine + 5-phospho-alpha-D-ribose 1-diphosphate. It catalyses the reaction IMP + diphosphate = hypoxanthine + 5-phospho-alpha-D-ribose 1-diphosphate. It functions in the pathway purine metabolism; GMP biosynthesis via salvage pathway; GMP from guanine: step 1/1. Its pathway is purine metabolism; XMP biosynthesis via salvage pathway; XMP from xanthine: step 1/1. In terms of biological role, purine salvage pathway enzyme that catalyzes the transfer of the ribosyl-5-phosphate group from 5-phospho-alpha-D-ribose 1-diphosphate (PRPP) to the N9 position of the 6-oxopurines guanine and xanthine to form the corresponding ribonucleotides GMP (guanosine 5'-monophosphate) and XMP (xanthosine 5'-monophosphate), with the release of PPi. To a lesser extent, also acts on hypoxanthine. The polypeptide is Xanthine-guanine phosphoribosyltransferase (Nitratidesulfovibrio vulgaris (strain DP4) (Desulfovibrio vulgaris)).